We begin with the raw amino-acid sequence, 147 residues long: uncharacterized protein (147 aa).

2 disordered regions span residues 1–49 (MRTP…NLNE) and 125–147 (SPSPTTSFNSTNPQNTHQTRKSN). 2 stretches are compositionally biased toward low complexity: residues 8–49 (NNNY…NLNE) and 125–140 (SPSPTTSFNSTNPQNT).

This is an uncharacterized protein from Dictyostelium discoideum (Social amoeba).